Reading from the N-terminus, the 246-residue chain is tRNA pseudouridine synthase A (246 aa).

Catalysis depends on Asp52, which acts as the Nucleophile. Tyr111 is a substrate binding site.

This sequence belongs to the tRNA pseudouridine synthase TruA family. In terms of assembly, homodimer.

The enzyme catalyses uridine(38/39/40) in tRNA = pseudouridine(38/39/40) in tRNA. In terms of biological role, formation of pseudouridine at positions 38, 39 and 40 in the anticodon stem and loop of transfer RNAs. The protein is tRNA pseudouridine synthase A of Borrelia garinii subsp. bavariensis (strain ATCC BAA-2496 / DSM 23469 / PBi) (Borreliella bavariensis).